A 92-amino-acid chain; its full sequence is Small ribosomal subunit protein uS19c (92 aa).

Belongs to the universal ribosomal protein uS19 family.

Its subcellular location is the plastid. The protein localises to the chloroplast. In terms of biological role, protein S19 forms a complex with S13 that binds strongly to the 16S ribosomal RNA. This chain is Small ribosomal subunit protein uS19c, found in Lemna minor (Common duckweed).